Consider the following 867-residue polypeptide: Xylosyltransferase 2 (867 aa).

Over 1–15 the chain is Cytoplasmic; the sequence is MVASARVQKLVRRYK. A helical; Signal-anchor for type II membrane protein transmembrane segment spans residues 16–36; it reads LAIATALAILLLQGLVVWSFS. Residues 37–867 are Lumenal-facing; the sequence is VLEDDEPGEK…GPVKADGRLR (831 aa). The interval 41–122 is disordered; it reads DEPGEKGRQK…PPPEAPGRQN (82 aa). The span at 53–65 shows a compositional bias: basic and acidic residues; it reads RPLDPSEGSKDTD. Residues 73–82 are compositionally biased toward basic residues; it reads SAGRRHGRWR. A glycan (N-linked (GlcNAc...) asparagine) is linked at Asn122. 2 cysteine pairs are disulfide-bonded: Cys161–Cys189 and Cys205–Cys447. UDP-alpha-D-xylose contacts are provided by residues Val238, Asp266, and 295 to 297; that span reads TIW. N-linked (GlcNAc...) asparagine glycosylation is present at Asn326. UDP-alpha-D-xylose contacts are provided by residues 399–400, Ser480, and 503–504; these read DW and RK. 2 disulfide bridges follow: Cys580–Cys835 and Cys828–Cys841. Residue Asn685 is glycosylated (N-linked (GlcNAc...) asparagine).

Belongs to the glycosyltransferase 14 family. XylT subfamily. As to quaternary structure, monomer. It depends on Mg(2+) as a cofactor. Requires Mn(2+) as cofactor. Contains disulfide bonds.

It is found in the golgi apparatus membrane. The protein resides in the secreted. It carries out the reaction UDP-alpha-D-xylose + L-seryl-[protein] = 3-O-(beta-D-xylosyl)-L-seryl-[protein] + UDP + H(+). It functions in the pathway glycan metabolism; chondroitin sulfate biosynthesis. It participates in glycan metabolism; heparan sulfate biosynthesis. Catalyzes the first step in the biosynthesis of chondroitin sulfate, heparan sulfate and dermatan sulfate proteoglycans, such as DCN. Transfers D-xylose from UDP-D-xylose to specific serine residues of the core protein. The chain is Xylosyltransferase 2 (XYLT2) from Bos taurus (Bovine).